A 274-amino-acid polypeptide reads, in one-letter code: Dermonecrotic toxin SdSicTox-betaIIB1aii (274 aa).

Residue histidine 5 is part of the active site. Mg(2+) contacts are provided by glutamate 25 and aspartate 27. Histidine 41 functions as the Nucleophile in the catalytic mechanism. 2 cysteine pairs are disulfide-bonded: cysteine 45–cysteine 51 and cysteine 47–cysteine 190. Aspartate 85 provides a ligand contact to Mg(2+).

It belongs to the arthropod phospholipase D family. Class II subfamily. Mg(2+) is required as a cofactor. As to expression, expressed by the venom gland.

The protein resides in the secreted. It catalyses the reaction an N-(acyl)-sphingosylphosphocholine = an N-(acyl)-sphingosyl-1,3-cyclic phosphate + choline. The enzyme catalyses an N-(acyl)-sphingosylphosphoethanolamine = an N-(acyl)-sphingosyl-1,3-cyclic phosphate + ethanolamine. The catalysed reaction is a 1-acyl-sn-glycero-3-phosphocholine = a 1-acyl-sn-glycero-2,3-cyclic phosphate + choline. It carries out the reaction a 1-acyl-sn-glycero-3-phosphoethanolamine = a 1-acyl-sn-glycero-2,3-cyclic phosphate + ethanolamine. Dermonecrotic toxins cleave the phosphodiester linkage between the phosphate and headgroup of certain phospholipids (sphingolipid and lysolipid substrates), forming an alcohol (often choline) and a cyclic phosphate. This toxin acts on sphingomyelin (SM). It may also act on ceramide phosphoethanolamine (CPE), lysophosphatidylcholine (LPC) and lysophosphatidylethanolamine (LPE), but not on lysophosphatidylserine (LPS), and lysophosphatidylglycerol (LPG). It acts by transphosphatidylation, releasing exclusively cyclic phosphate products as second products. Induces dermonecrosis, hemolysis, increased vascular permeability, edema, inflammatory response, and platelet aggregation. This chain is Dermonecrotic toxin SdSicTox-betaIIB1aii, found in Sicarius cf. damarensis (strain GJB-2008) (Six-eyed sand spider).